The primary structure comprises 329 residues: UDP-glucose 4-epimerase (329 aa).

NAD(+) is bound by residues 11-12, 31-36, 51-52, 71-75, T115, Y139, K143, and F167; these read YV, DNFSTG, DV, and FAARS. Residues T115 and Y139 each coordinate substrate. Y139 acts as the Proton acceptor in catalysis. Substrate-binding positions include N168, 185-186, 202-204, R217, and 277-280; these read HL, FMF, and RAGD.

It belongs to the NAD(P)-dependent epimerase/dehydratase family. Homodimer. It depends on NAD(+) as a cofactor.

The enzyme catalyses UDP-alpha-D-glucose = UDP-alpha-D-galactose. It functions in the pathway carbohydrate metabolism; galactose metabolism. Functionally, involved in the metabolism of galactose. Catalyzes the conversion of UDP-galactose (UDP-Gal) to UDP-glucose (UDP-Glc) through a mechanism involving the transient reduction of NAD. This Corynebacterium glutamicum (strain ATCC 13032 / DSM 20300 / JCM 1318 / BCRC 11384 / CCUG 27702 / LMG 3730 / NBRC 12168 / NCIMB 10025 / NRRL B-2784 / 534) protein is UDP-glucose 4-epimerase (galE).